Here is a 478-residue protein sequence, read N- to C-terminus: Glutamate--tRNA ligase (478 aa).

The 'HIGH' region signature appears at 9 to 19; the sequence is PSPTGLLHIGT. The 'KMSKS' region motif lies at 248–252; sequence KLSKR. Residue K251 participates in ATP binding.

This sequence belongs to the class-I aminoacyl-tRNA synthetase family. Glutamate--tRNA ligase type 1 subfamily. In terms of assembly, monomer.

Its subcellular location is the cytoplasm. The catalysed reaction is tRNA(Glu) + L-glutamate + ATP = L-glutamyl-tRNA(Glu) + AMP + diphosphate. In terms of biological role, catalyzes the attachment of glutamate to tRNA(Glu) in a two-step reaction: glutamate is first activated by ATP to form Glu-AMP and then transferred to the acceptor end of tRNA(Glu). This chain is Glutamate--tRNA ligase, found in Prochlorococcus marinus (strain MIT 9515).